A 96-amino-acid polypeptide reads, in one-letter code: Cytochrome b (96 aa).

3 helical membrane-spanning segments follow: residues 1–15, 39–60, and 75–95; these read LCXI…FLAM, WLIR…YLHI, and WNVG…GYVL. Residues histidine 45 and histidine 59 each contribute to the heme b site.

It belongs to the cytochrome b family. The cytochrome bc1 complex contains 3 respiratory subunits (MT-CYB, CYC1 and UQCRFS1), 2 core proteins (UQCRC1 and UQCRC2) and probably 6 low-molecular weight proteins. Heme b serves as cofactor.

It localises to the mitochondrion inner membrane. In terms of biological role, component of the ubiquinol-cytochrome c reductase complex (complex III or cytochrome b-c1 complex) that is part of the mitochondrial respiratory chain. The b-c1 complex mediates electron transfer from ubiquinol to cytochrome c. Contributes to the generation of a proton gradient across the mitochondrial membrane that is then used for ATP synthesis. The sequence is that of Cytochrome b (mt-cyb) from Geophagus steindachneri (Red hump earth eater).